Here is a 147-residue protein sequence, read N- to C-terminus: SsrA-binding protein (147 aa).

This sequence belongs to the SmpB family.

The protein resides in the cytoplasm. Its function is as follows. Required for rescue of stalled ribosomes mediated by trans-translation. Binds to transfer-messenger RNA (tmRNA), required for stable association of tmRNA with ribosomes. tmRNA and SmpB together mimic tRNA shape, replacing the anticodon stem-loop with SmpB. tmRNA is encoded by the ssrA gene; the 2 termini fold to resemble tRNA(Ala) and it encodes a 'tag peptide', a short internal open reading frame. During trans-translation Ala-aminoacylated tmRNA acts like a tRNA, entering the A-site of stalled ribosomes, displacing the stalled mRNA. The ribosome then switches to translate the ORF on the tmRNA; the nascent peptide is terminated with the 'tag peptide' encoded by the tmRNA and targeted for degradation. The ribosome is freed to recommence translation, which seems to be the essential function of trans-translation. The sequence is that of SsrA-binding protein from Mycoplasmopsis agalactiae (strain NCTC 10123 / CIP 59.7 / PG2) (Mycoplasma agalactiae).